The sequence spans 562 residues: MRSDEVKKGFDRTPHRSLLRATGLKDEDFDKPFIGVANSFIELIPGHFFLDKVSAIIKEEIRANGCVPFEFNTIGVDDGIAMGHDGMLFSLPSRELIANSIETVMNAHKLDAMIAIPNCDKIVPGMIMGALRVNVPTIFVSGGPMQKGYTKDGTPIDLATAFEAVGKFEAGDISEEQLKDIECNACPSGGSCSGMFTANSMNTLMEAMGIALPGNGTILALTPQREVLYRQAARRICEIAKDKASREKYKLKNILNENAVKNAFAVDMAMGGSSNTVLHMLAISKEAGVNFELKDINAISKRVSHIAKISPSLSTVHMEDINKAGGVNAVMKEMTKRGNDILADNLTISGETVLEKIKDAYIKDTNIIHTIDNPYSQVGGLAILYGNLAEQGAVIKTAGITGSRVFTGTAVCFDGQPEAIKGIVSGKVKAGNVVVIRYEGPKGGPGMQEMLAPTSLIMGMGLGSSVALITDGRFSGATRGASIGHVSPEAAEGGMIGLLKDGDEIHIDVDQYILSVNLSDEEIAKRKADFKPLKKPLNSSWLGQYRALVTNASSGAVLKTDL.

Asp-78 serves as a coordination point for Mg(2+). Position 119 (Cys-119) interacts with [2Fe-2S] cluster. Asp-120 and Lys-121 together coordinate Mg(2+). Lys-121 carries the N6-carboxylysine modification. A [2Fe-2S] cluster-binding site is contributed by Cys-192. Position 449 (Glu-449) interacts with Mg(2+). Ser-475 functions as the Proton acceptor in the catalytic mechanism.

This sequence belongs to the IlvD/Edd family. Homodimer. It depends on [2Fe-2S] cluster as a cofactor. Mg(2+) serves as cofactor.

It catalyses the reaction (2R)-2,3-dihydroxy-3-methylbutanoate = 3-methyl-2-oxobutanoate + H2O. The catalysed reaction is (2R,3R)-2,3-dihydroxy-3-methylpentanoate = (S)-3-methyl-2-oxopentanoate + H2O. It participates in amino-acid biosynthesis; L-isoleucine biosynthesis; L-isoleucine from 2-oxobutanoate: step 3/4. Its pathway is amino-acid biosynthesis; L-valine biosynthesis; L-valine from pyruvate: step 3/4. Functions in the biosynthesis of branched-chain amino acids. Catalyzes the dehydration of (2R,3R)-2,3-dihydroxy-3-methylpentanoate (2,3-dihydroxy-3-methylvalerate) into 2-oxo-3-methylpentanoate (2-oxo-3-methylvalerate) and of (2R)-2,3-dihydroxy-3-methylbutanoate (2,3-dihydroxyisovalerate) into 2-oxo-3-methylbutanoate (2-oxoisovalerate), the penultimate precursor to L-isoleucine and L-valine, respectively. The sequence is that of Dihydroxy-acid dehydratase from Aliarcobacter butzleri (strain RM4018) (Arcobacter butzleri).